A 1940-amino-acid polypeptide reads, in one-letter code: Myosin-3 (1940 aa).

Residues 33 to 82 (DAKTYCFVVDSKEEYAKGKIKSSQDGKVTVETEDNRTLVVKPEDVYAMNP) form the Myosin N-terminal SH3-like domain. The Myosin motor domain occupies 86–779 (DKIEDMAMLT…LLGTLEEMRD (694 aa)). K130 carries the post-translational modification N6,N6,N6-trimethyllysine. 179–186 (GESGAGKT) is a binding site for ATP. Actin-binding regions lie at residues 656–678 (LNKL…IPNE) and 758–772 (KFGH…GLLG). The IQ domain maps to 782-811 (LAKLITRTQAVCRGFLMRVEFQKMMQRRES). Residues 840 to 1933 (LLKSAETEKE…KTRDFTSSRM (1094 aa)) adopt a coiled-coil conformation. Residues 1260 to 1289 (ARGKNEETQRSLSELTTQKSRLQTEAGELS) are disordered. Polar residues predominate over residues 1269–1282 (RSLSELTTQKSRLQ).

This sequence belongs to the TRAFAC class myosin-kinesin ATPase superfamily. Myosin family. Muscle myosin is a hexameric protein that consists of 2 heavy chain subunits (MHC), 2 alkali light chain subunits (MLC) and 2 regulatory light chain subunits (MLC-2).

It localises to the cytoplasm. It is found in the myofibril. In terms of biological role, muscle contraction. This Rattus norvegicus (Rat) protein is Myosin-3 (Myh3).